The primary structure comprises 510 residues: Solute carrier family 2, facilitated glucose transporter member 2 (510 aa).

At 1–10 (MTEDKVTGTL) the chain is on the cytoplasmic side. A helical membrane pass occupies residues 11-31 (VLAVFTAVLSSFQFGYDIGVI). The Extracellular portion of the chain corresponds to 32-96 (NAPQQVIITH…SASLITMFWS (65 aa)). Residue Asn-62 is glycosylated (N-linked (GlcNAc...) asparagine). The chain crosses the membrane as a helical span at residues 97–117 (LSVSSFAVGGMIASFFGGLLG). At 118–122 (DKLGR) the chain is on the cytoplasmic side. The chain crosses the membrane as a helical span at residues 123–143 (IKALLVANILSLVGALLMGFS). The Extracellular segment spans residues 144-157 (KLGPSHILIISGRG). A helical membrane pass occupies residues 158-178 (ISGLYCGLISGLIPMYIGEIA). Topologically, residues 179–191 (PTTLRGAIGALHQ) are cytoplasmic. Gln-191 lines the D-glucose pocket. The chain crosses the membrane as a helical span at residues 192 to 212 (LAIVTGILISQIVGLDFILGN). Topologically, residues 213-215 (HEL) are extracellular. A helical membrane pass occupies residues 216–236 (WHILLGLSAVPAILQCLLLFF). The Cytoplasmic segment spans residues 237–301 (CPESPRYLYI…LFTNASYRQP (65 aa)). A helical membrane pass occupies residues 302 to 322 (ILVALMLHAAQQFSGINGIFY). Residues 312–313 (QQ) and Asn-318 contribute to the D-glucose site. Residues 323 to 336 (YSTSIFQTAGISQP) are Extracellular-facing. Residues 337–357 (VYATIGVGAVNTVFTAVSVFL) traverse the membrane as a helical segment. D-glucose is bound at residue Asn-347. At 358-365 (VEKAGRRS) the chain is on the cytoplasmic side. The helical transmembrane segment at 366–386 (LFLIGMSGMFVCAIFMSVGLV) threads the bilayer. Topologically, residues 387–400 (LLSKFPWMNYVSMT) are extracellular. The chain crosses the membrane as a helical span at residues 401–421 (AIFLFVSFFEIGPGPIPWFMV). Positions 410 and 418 each coordinate D-glucose. The Cytoplasmic segment spans residues 422 to 431 (AEFFSQGPRP). A helical transmembrane segment spans residues 432–452 (AALAIAAFSNWTGNFIIALCF). Residues 453 to 454 (QY) are Extracellular-facing. Residues 455–475 (IADFCGPYVFFLLLVWSWPLF) traverse the membrane as a helical segment. The Cytoplasmic segment spans residues 476-510 (CSHFLKFQKPKENPLRKSQQSSERRGVQLKRQKLL). The segment at 490-510 (LRKSQQSSERRGVQLKRQKLL) is disordered.

It belongs to the major facilitator superfamily. Sugar transporter (TC 2.A.1.1) family. Glucose transporter subfamily. Post-translationally, N-glycosylated; required for stability and retention at the cell surface of pancreatic beta cells.

It localises to the cell membrane. It carries out the reaction D-glucose(out) = D-glucose(in). The catalysed reaction is D-fructose(out) = D-fructose(in). It catalyses the reaction L-dehydroascorbate(out) = L-dehydroascorbate(in). The enzyme catalyses D-galactose(in) = D-galactose(out). D-glucose and maltose competitively inhibit fructose transport. D-glucose, D-fructose and maltose inhibit deoxyglucose transport. In terms of biological role, facilitative hexose transporter that mediates the transport of glucose, fructose and galactose. Likely mediates the bidirectional transfer of glucose across the plasma membrane of hepatocytes and is responsible for uptake of glucose by the beta cells; may comprise part of the glucose-sensing mechanism of the beta cell. May also participate with the Na(+)/glucose cotransporter in the transcellular transport of glucose in the small intestine and kidney. Also able to mediate the transport of dehydroascorbate. The sequence is that of Solute carrier family 2, facilitated glucose transporter member 2 from Bos taurus (Bovine).